We begin with the raw amino-acid sequence, 147 residues long: Large ribosomal subunit protein uL16 (147 aa).

The protein belongs to the universal ribosomal protein uL16 family. In terms of assembly, part of the 50S ribosomal subunit.

Binds 23S rRNA and is also seen to make contacts with the A and possibly P site tRNAs. In Caldicellulosiruptor bescii (strain ATCC BAA-1888 / DSM 6725 / KCTC 15123 / Z-1320) (Anaerocellum thermophilum), this protein is Large ribosomal subunit protein uL16.